The sequence spans 22 residues: Short-chain-enoyl-CoA hydratase (22 aa).

This sequence belongs to the enoyl-CoA hydratase/isomerase family.

The enzyme catalyses a short-chain (3S)-3-hydroxyacyl-CoA = a short-chain (2E)-enoyl-CoA + H2O. It participates in lipid metabolism; butanoate metabolism. This is Short-chain-enoyl-CoA hydratase (crt) from Clostridium pasteurianum.